A 367-amino-acid polypeptide reads, in one-letter code: S-adenosylmethionine decarboxylase proenzyme 3 (367 aa).

Active-site residues include glutamate 9 and glutamate 12. Residue serine 69 is the Schiff-base intermediate with substrate; via pyruvic acid of the active site. Serine 69 carries the pyruvic acid (Ser); by autocatalysis modification. Cysteine 83 (proton donor; for catalytic activity) is an active-site residue. Active-site proton acceptor; for processing activity residues include serine 234 and histidine 247.

This sequence belongs to the eukaryotic AdoMetDC family. Pyruvate serves as cofactor. In terms of processing, is synthesized initially as an inactive proenzyme. Formation of the active enzyme involves a self-maturation process in which the active site pyruvoyl group is generated from an internal serine residue via an autocatalytic post-translational modification. Two non-identical subunits are generated from the proenzyme in this reaction, and the pyruvate is formed at the N-terminus of the alpha chain, which is derived from the carboxyl end of the proenzyme. The post-translation cleavage follows an unusual pathway, termed non-hydrolytic serinolysis, in which the side chain hydroxyl group of the serine supplies its oxygen atom to form the C-terminus of the beta chain, while the remainder of the serine residue undergoes an oxidative deamination to produce ammonia and the pyruvoyl group blocking the N-terminus of the alpha chain.

The enzyme catalyses S-adenosyl-L-methionine + H(+) = S-adenosyl 3-(methylsulfanyl)propylamine + CO2. Its pathway is amine and polyamine biosynthesis; S-adenosylmethioninamine biosynthesis; S-adenosylmethioninamine from S-adenosyl-L-methionine: step 1/1. This is S-adenosylmethionine decarboxylase proenzyme 3 (SAMDC3) from Brassica juncea (Indian mustard).